A 1033-amino-acid polypeptide reads, in one-letter code: NACHT, LRR and PYD domains-containing protein 11 (1033 aa).

Residues 1 to 91 (MAESDSTDFD…CRKIIGRRNR (91 aa)) form the Pyrin domain. The NACHT domain maps to 147–470 (LNVFLMGERA…AFLMAVPNYL (324 aa)). Residue 153 to 160 (GERASGKT) coordinates ATP. 6 LRR repeats span residues 588–611 (CCHL…LIRP), 632–655 (MESL…ILSK), 745–768 (GGSL…ILCD), 802–827 (SPTL…TFPL), 859–882 (NEKL…LLCG), and 919–944 (LERL…LISP).

This sequence belongs to the NLRP family.

In terms of biological role, involved in inflammation. The protein is NACHT, LRR and PYD domains-containing protein 11 (NLRP11) of Homo sapiens (Human).